Consider the following 373-residue polypeptide: tRNA-specific 2-thiouridylase MnmA (373 aa).

ATP contacts are provided by residues 12 to 19 and Met-38; that span reads GMSGGVDS. The segment at 98 to 100 is interaction with target base in tRNA; that stretch reads NPD. Cys-103 acts as the Nucleophile in catalysis. Cys-103 and Cys-200 are disulfide-bonded. Gly-127 provides a ligand contact to ATP. The interval 150–152 is interaction with tRNA; the sequence is KDQ. Cys-200 functions as the Cysteine persulfide intermediate in the catalytic mechanism. Residues 312 to 313 form an interaction with tRNA region; that stretch reads RY.

Belongs to the MnmA/TRMU family.

It is found in the cytoplasm. It carries out the reaction S-sulfanyl-L-cysteinyl-[protein] + uridine(34) in tRNA + AH2 + ATP = 2-thiouridine(34) in tRNA + L-cysteinyl-[protein] + A + AMP + diphosphate + H(+). Functionally, catalyzes the 2-thiolation of uridine at the wobble position (U34) of tRNA, leading to the formation of s(2)U34. This chain is tRNA-specific 2-thiouridylase MnmA, found in Streptococcus thermophilus (strain CNRZ 1066).